The chain runs to 51 residues: Sperm protamine P1 (51 aa).

This sequence belongs to the protamine P1 family. Testis.

The protein localises to the nucleus. It localises to the chromosome. Its function is as follows. Protamines substitute for histones in the chromatin of sperm during the haploid phase of spermatogenesis. They compact sperm DNA into a highly condensed, stable and inactive complex. This Colobus guereza (Mantled guereza) protein is Sperm protamine P1 (PRM1).